Here is a 113-residue protein sequence, read N- to C-terminus: UPF0339 protein MS1092 (113 aa).

2 consecutive repeat copies span residues 11 to 59 and 62 to 110.

Belongs to the UPF0339 family. Duplicated subfamily.

The sequence is that of UPF0339 protein MS1092 from Mannheimia succiniciproducens (strain KCTC 0769BP / MBEL55E).